The following is a 332-amino-acid chain: tRNA U34 carboxymethyltransferase (332 aa).

Carboxy-S-adenosyl-L-methionine-binding positions include Lys91, Trp105, Lys110, Gly130, 152–154 (DPS), 181–182 (IE), Met196, Tyr200, and Arg315.

This sequence belongs to the class I-like SAM-binding methyltransferase superfamily. CmoB family. Homotetramer.

The enzyme catalyses carboxy-S-adenosyl-L-methionine + 5-hydroxyuridine(34) in tRNA = 5-carboxymethoxyuridine(34) in tRNA + S-adenosyl-L-homocysteine + H(+). In terms of biological role, catalyzes carboxymethyl transfer from carboxy-S-adenosyl-L-methionine (Cx-SAM) to 5-hydroxyuridine (ho5U) to form 5-carboxymethoxyuridine (cmo5U) at position 34 in tRNAs. The polypeptide is tRNA U34 carboxymethyltransferase (Shewanella sp. (strain W3-18-1)).